The following is a 487-amino-acid chain: Betaine aldehyde dehydrogenase (487 aa).

Residues Ile27 and Asp93 each coordinate K(+). Residue Gly149–Trp151 participates in NAD(+) binding. Lys161 functions as the Charge relay system in the catalytic mechanism. Residues Lys175 to Glu178 and Ser228 to Thr231 contribute to the NAD(+) site. Catalysis depends on Glu249, which acts as the Proton acceptor. Positions 251, 283, and 384 each coordinate NAD(+). The active-site Nucleophile is Cys283. Cys283 is modified (cysteine sulfenic acid (-SOH)). 2 residues coordinate K(+): Lys454 and Gly457. Glu461 functions as the Charge relay system in the catalytic mechanism.

It belongs to the aldehyde dehydrogenase family. As to quaternary structure, dimer of dimers. K(+) is required as a cofactor.

It carries out the reaction betaine aldehyde + NAD(+) + H2O = glycine betaine + NADH + 2 H(+). Its pathway is amine and polyamine biosynthesis; betaine biosynthesis via choline pathway; betaine from betaine aldehyde: step 1/1. In terms of biological role, involved in the biosynthesis of the osmoprotectant glycine betaine. Catalyzes the irreversible oxidation of betaine aldehyde to the corresponding acid. The sequence is that of Betaine aldehyde dehydrogenase from Mesorhizobium japonicum (strain LMG 29417 / CECT 9101 / MAFF 303099) (Mesorhizobium loti (strain MAFF 303099)).